The chain runs to 416 residues: Glutamyl-tRNA reductase (416 aa).

Residues 49 to 52 (TCNR), Ser105, 110 to 112 (EPQ), and Gln116 each bind substrate. The active-site Nucleophile is the Cys50. Residue 185–190 (GAGETI) participates in NADP(+) binding.

Belongs to the glutamyl-tRNA reductase family. As to quaternary structure, homodimer.

The catalysed reaction is (S)-4-amino-5-oxopentanoate + tRNA(Glu) + NADP(+) = L-glutamyl-tRNA(Glu) + NADPH + H(+). It participates in porphyrin-containing compound metabolism; protoporphyrin-IX biosynthesis; 5-aminolevulinate from L-glutamyl-tRNA(Glu): step 1/2. Catalyzes the NADPH-dependent reduction of glutamyl-tRNA(Glu) to glutamate 1-semialdehyde (GSA). The protein is Glutamyl-tRNA reductase of Shewanella sp. (strain MR-7).